The sequence spans 303 residues: Cilia- and flagella-associated protein 161 (303 aa).

Microtubule inner protein component of sperm flagellar doublet microtubules.

It localises to the cytoplasm. The protein localises to the cytoskeleton. The protein resides in the cilium axoneme. Its subcellular location is the flagellum axoneme. Functionally, microtubule inner protein (MIP) part of the dynein-decorated doublet microtubules (DMTs) in cilia axoneme, which is required for motile cilia beating. This chain is Cilia- and flagella-associated protein 161, found in Mus musculus (Mouse).